The primary structure comprises 306 residues: Pre-mRNA-splicing factor cwf26 (306 aa).

The segment at 130–152 (KAEERRKREEKSSNLDEEELRKS) is disordered. A coiled-coil region spans residues 130–198 (KAEERRKREE…KEQQQGVVQV (69 aa)).

The protein belongs to the CWC26 family. Belongs to the 40S cdc5-associated complex (or cwf complex), a spliceosome sub-complex reminiscent of a late-stage spliceosome composed of the U2, U5 and U6 snRNAs and at least brr2, cdc5, cwf2/prp3, cwf3/syf1, cwf4/syf3, cwf5/ecm2, spp42/cwf6, cwf7/spf27, cwf8, cwf9, cwf10, cwf11, cwf12, prp45/cwf13, cwf14, cwf15, cwf16, cwf17, cwf18, cwf19, cwf20, cwf21, cwf22, cwf23, cwf24, cwf25, cwf26, cyp7/cwf27, cwf28, cwf29/ist3, lea1, msl1, prp5/cwf1, prp10, prp12/sap130, prp17, prp22, sap61, sap62, sap114, sap145, slu7, smb1, smd1, smd3, smf1, smg1 and syf2.

It localises to the cytoplasm. The protein localises to the nucleus. In terms of biological role, involved in mRNA splicing. The sequence is that of Pre-mRNA-splicing factor cwf26 (cwf26) from Schizosaccharomyces pombe (strain 972 / ATCC 24843) (Fission yeast).